Reading from the N-terminus, the 206-residue chain is Oligoribonuclease (206 aa).

In terms of domain architecture, Exonuclease spans 20-183; the sequence is LVWLDMEMTG…ADIHESIDEL (164 aa). Residue Y141 is part of the active site.

The protein belongs to the oligoribonuclease family.

It localises to the cytoplasm. In terms of biological role, 3'-to-5' exoribonuclease specific for small oligoribonucleotides. The chain is Oligoribonuclease from Burkholderia cenocepacia (strain HI2424).